Here is a 49-residue protein sequence, read N- to C-terminus: Turripeptide OL47 (49 aa).

Residues 28-49 (RSDTEKKCTGGPDPCPPRQWPD) form a disordered region. Over residues 40 to 49 (DPCPPRQWPD) the composition is skewed to pro residues.

Post-translationally, contains 4 disulfide bonds. As to expression, expressed by the venom duct.

The protein resides in the secreted. In terms of biological role, acts as a neurotoxin by inhibiting an ion channel. The chain is Turripeptide OL47 from Iotyrris olangoensis (Sea snail).